The primary structure comprises 559 residues: Palmitoyltransferase AKR1 (559 aa).

ANK repeat units lie at residues 8-38, 42-71, and 75-104; these read QGFN…PVDT, LGHT…RVDT, and EGFT…DIKA. Transmembrane regions (helical) follow at residues 148 to 168, 192 to 212, and 217 to 237; these read LMVL…FLFG, TAVF…YLLG, and LLWM…FFYG. One can recognise a DHHC domain in the interval 272 to 322; the sequence is HFCVSCIAQRPLRSKHCKFCNRCVAKFDHHCPWIYNCIGAKNHRAFLIFLA. Cys-302 functions as the S-palmitoyl cysteine intermediate in the catalytic mechanism. Transmembrane regions (helical) follow at residues 316-336 and 373-393; these read AFLI…YLSF and LAFW…VQLY.

This sequence belongs to the DHHC palmitoyltransferase family. AKR/ZDHHC17 subfamily.

The protein localises to the early endosome membrane. It localises to the golgi apparatus membrane. The catalysed reaction is L-cysteinyl-[protein] + hexadecanoyl-CoA = S-hexadecanoyl-L-cysteinyl-[protein] + CoA. Palmitoyltransferase specific for casein kinase 1. The sequence is that of Palmitoyltransferase AKR1 from Mortierella alpina (Oleaginous fungus).